A 204-amino-acid chain; its full sequence is Altered inheritance of mitochondria protein 20 (204 aa).

Residues 6–26 (VAVGTAVGIPIAVGVIIALIF) traverse the membrane as a helical segment.

Belongs to the SKG1 family.

The protein localises to the vacuole membrane. Its function is as follows. Involved in cell cycle progression and surviving DNA damage. The sequence is that of Altered inheritance of mitochondria protein 20 (AIM20) from Saccharomyces cerevisiae (strain JAY291) (Baker's yeast).